The sequence spans 147 residues: MRTYQPKPADVQRAWHIIDATDVVLGRLASQAAQLLRGKNKPYFAPHIDTGDFVVIINAGKVAMTGNKREQAKYHRHSGFPGGLRSTSYGELLDTRPHVIVERAIRGMLPHNRLGRAQGSKLKVYAGPTHPHQAQQPVPYEIKQVAQ.

The segment at Ala126–Gln147 is disordered.

Belongs to the universal ribosomal protein uL13 family. As to quaternary structure, part of the 50S ribosomal subunit.

In terms of biological role, this protein is one of the early assembly proteins of the 50S ribosomal subunit, although it is not seen to bind rRNA by itself. It is important during the early stages of 50S assembly. The sequence is that of Large ribosomal subunit protein uL13 from Parafrankia sp. (strain EAN1pec).